A 195-amino-acid chain; its full sequence is Pyruvoyl-dependent arginine decarboxylase AaxB (195 aa).

Ser-53 is subject to Pyruvic acid (Ser).

Belongs to the pyruvoyl-dependent arginine decarboxylase family. In terms of assembly, trimer of an alpha-beta dimer. The cofactor is pyruvate.

The protein localises to the cytoplasm. It catalyses the reaction L-arginine + H(+) = agmatine + CO2. Part of the AaxABC system, catalyzes the decarboxylation of L-arginine. The arginine uptake by the bacterium in the macrophage may be a virulence factor against the host innate immune response. This chain is Pyruvoyl-dependent arginine decarboxylase AaxB (aaxB), found in Chlamydia caviae (strain ATCC VR-813 / DSM 19441 / 03DC25 / GPIC) (Chlamydophila caviae).